The chain runs to 510 residues: F-box only protein 15 (510 aa).

Positions 77-117 constitute an F-box domain; that stretch reads MPSEILLKIFSYLDAVSLLCTGCVSRRFYHLANDNFIWIGI.

In terms of assembly, directly interacts with SKP1 and CUL1.

Its function is as follows. Substrate-recognition component of the SCF (SKP1-CUL1-F-box protein)-type E3 ubiquitin ligase complex. The chain is F-box only protein 15 (FBXO15) from Homo sapiens (Human).